The chain runs to 296 residues: Large ribosomal subunit protein uL18A (296 aa).

The interval 251–296 (PVHEKKPKKEVKKKRWNRAKLSLEQKKDRVAQKKASFLRAQEKADS) is disordered. Positions 255-268 (KKPKKEVKKKRWNR) are enriched in basic residues. The span at 271 to 281 (LSLEQKKDRVA) shows a compositional bias: basic and acidic residues.

Belongs to the universal ribosomal protein uL18 family. As to quaternary structure, component of the large ribosomal subunit (LSU). Part of a LSU subcomplex, the 5S RNP which is composed of the 5S RNA, RPL5 and RPL11.

It is found in the cytoplasm. The protein resides in the nucleus. The protein localises to the nucleolus. Functionally, component of the ribosome, a large ribonucleoprotein complex responsible for the synthesis of proteins in the cell. The small ribosomal subunit (SSU) binds messenger RNAs (mRNAs) and translates the encoded message by selecting cognate aminoacyl-transfer RNA (tRNA) molecules. The large subunit (LSU) contains the ribosomal catalytic site termed the peptidyl transferase center (PTC), which catalyzes the formation of peptide bonds, thereby polymerizing the amino acids delivered by tRNAs into a polypeptide chain. The nascent polypeptides leave the ribosome through a tunnel in the LSU and interact with protein factors that function in enzymatic processing, targeting, and the membrane insertion of nascent chains at the exit of the ribosomal tunnel. As part of the 5S RNP/5S ribonucleoprotein particle it is an essential component of the LSU, required for its formation and the maturation of rRNAs. It also couples ribosome biogenesis to p53/TP53 activation. As part of the 5S RNP it accumulates in the nucleoplasm and inhibits MDM2, when ribosome biogenesis is perturbed, mediating the stabilization and the activation of TP53. This Xenopus laevis (African clawed frog) protein is Large ribosomal subunit protein uL18A (rpl5-a).